Here is a 353-residue protein sequence, read N- to C-terminus: Photosystem II protein D1 (353 aa).

Threonine 2 is subject to N-acetylthreonine. A Phosphothreonine modification is found at threonine 2. Helical transmembrane passes span 29–46 (YIGW…TATS), 118–133 (HFLL…EWEL), and 142–156 (WIAV…AAAA). Histidine 118 is a chlorophyll a binding site. Residue tyrosine 126 coordinates pheophytin a. Residues aspartate 170 and glutamate 189 each contribute to the [CaMn4O5] cluster site. Residues 197 to 218 (FHMLGVAGVFGGSLFSAMHGSL) traverse the membrane as a helical segment. Histidine 198 lines the chlorophyll a pocket. Residues histidine 215 and 264 to 265 (SF) contribute to the a quinone site. Histidine 215 is a binding site for Fe cation. Histidine 272 lines the Fe cation pocket. A helical membrane pass occupies residues 274–288 (FLAAWPVVGIWFTAL). Residues histidine 332, glutamate 333, aspartate 342, and alanine 344 each contribute to the [CaMn4O5] cluster site. The propeptide occupies 345–353 (AVEAPSTNG).

It belongs to the reaction center PufL/M/PsbA/D family. In terms of assembly, PSII is composed of 1 copy each of membrane proteins PsbA, PsbB, PsbC, PsbD, PsbE, PsbF, PsbH, PsbI, PsbJ, PsbK, PsbL, PsbM, PsbT, PsbX, PsbY, PsbZ, Psb30/Ycf12, at least 3 peripheral proteins of the oxygen-evolving complex and a large number of cofactors. It forms dimeric complexes. The D1/D2 heterodimer binds P680, chlorophylls that are the primary electron donor of PSII, and subsequent electron acceptors. It shares a non-heme iron and each subunit binds pheophytin, quinone, additional chlorophylls, carotenoids and lipids. D1 provides most of the ligands for the Mn4-Ca-O5 cluster of the oxygen-evolving complex (OEC). There is also a Cl(-1) ion associated with D1 and D2, which is required for oxygen evolution. The PSII complex binds additional chlorophylls, carotenoids and specific lipids. is required as a cofactor. In terms of processing, tyr-161 forms a radical intermediate that is referred to as redox-active TyrZ, YZ or Y-Z. Post-translationally, C-terminally processed by CTPA; processing is essential to allow assembly of the oxygen-evolving complex and thus photosynthetic growth.

The protein resides in the plastid. It localises to the chloroplast thylakoid membrane. The enzyme catalyses 2 a plastoquinone + 4 hnu + 2 H2O = 2 a plastoquinol + O2. Its function is as follows. Photosystem II (PSII) is a light-driven water:plastoquinone oxidoreductase that uses light energy to abstract electrons from H(2)O, generating O(2) and a proton gradient subsequently used for ATP formation. It consists of a core antenna complex that captures photons, and an electron transfer chain that converts photonic excitation into a charge separation. The D1/D2 (PsbA/PsbD) reaction center heterodimer binds P680, the primary electron donor of PSII as well as several subsequent electron acceptors. This is Photosystem II protein D1 from Panax ginseng (Korean ginseng).